The sequence spans 587 residues: MPYDATKMMDWQISEEAEKDMPSPWQWQEKLGLLKEEILPMGRLCKLDFLKIMNRLKDKPDGKYIEVTAITPTPLGEGKSTTSVGLMEGLGKRGVNVGGCLRQPSGGPTMNIKGTAAGGGNALLIPMTEFSMGLTGDINDIMNAHNLAMVALTARMQHERNYTDEQLDRLTKMRRLHIDPTRVEMGWIMDFCAQALRNIIIGIGGRQDGYMMQSKFGIAVSSELMAILSIVKDLPDLRKRLNEITVAFDRRGNPVTTGDLEVGGAMTAFMRNTINPTLMCTAEYQPCMVHAGPFANIAVGQSSIIADRIGLKMFDYHVTESGFAADIGFEKFWNVKCRYSGLKPHVSVLTTTIRALKMHGGGPKVVAGLAMPEEYTKENLKLLEKGIVNMVHHINTIRKSGMNPVVCINAFHTDTKDEIALVRKHAEAAGARCALSEHWAKGGEGALEFADAVIDACKQESQFKFLYPLEMKLRDRVSTVAREVYGADGVSWTPDAEAKAKMLENDPKYDDYATMMVKTHLSLTHDPSVKGVPKGWVLPIRDVLIYSGAKFLCPCAGTISLMPGTSSNPAFRRIDVDVNTGKVKGLF.

73 to 80 (TPLGEGKS) is an ATP binding site.

This sequence belongs to the formate--tetrahydrofolate ligase family.

The catalysed reaction is (6S)-5,6,7,8-tetrahydrofolate + formate + ATP = (6R)-10-formyltetrahydrofolate + ADP + phosphate. The protein operates within one-carbon metabolism; tetrahydrofolate interconversion. The sequence is that of Formate--tetrahydrofolate ligase from Syntrophobacter fumaroxidans (strain DSM 10017 / MPOB).